Consider the following 977-residue polypeptide: MPARRLLLLLTLLLPGLGIFGSTSTVTLPETLLFVSTLDGSLHAVSKRTGSIKWTLKEDPVLQVPTHVEEPAFLPDPNDGSLYTLGSKNNEGLTKLPFTIPELVQASPCRSSDGILYMGKKQDIWYVIDLLTGEKQQTLSSAFADSLCPSTSLLYLGRTEYTITMYDTKTRELRWNATYFDYAASLPEDDVDYKMSHFVSNGDGLVVTVDSESGDVLWIQNYASPVVAFYVWQREGLRKVMHINVAVETLRYLTFMSGEVGRITKWKYPFPKETEAKSKLTPTLYVGKYSTSLYASPSMVHEGVAVVPRGSTLPLLEGPQTDGVTIGDKGECVITPSTDVKFDPGLKSKNKLNYLRNYWLLIGHHETPLSASTKMLERFPNNLPKHRENVIPADSEKKSFEEVINLVDQTSENAPTTVSRDVEEKPAHAPARPEAPVDSMLKDMATIILSTFLLIGWVAFIITYPLSMHQQQQLQHQQFQKELEKIQLLQQQQQQLPFHPPGDTAQDGELLDTSGPYSESSGTSSPSTSPRASNHSLCSGSSASKAGSSPSLEQDDGDEETSVVIVGKISFCPKDVLGHGAEGTIVYRGMFDNRDVAVKRILPECFSFADREVQLLRESDEHPNVIRYFCTEKDRQFQYIAIELCAATLQEYVEQKDFAHLGLEPITLLQQTTSGLAHLHSLNIVHRDLKPHNILISMPNAHGKIKAMISDFGLCKKLAVGRHSFSRRSGVPGTEGWIAPEMLSEDCKENPTYTVDIFSAGCVFYYVISEGSHPFGKSLQRQANILLGACSLDCLHPEKHEDVIARELIEKMIAMDPQKRPSAKHVLKHPFFWSLEKQLQFFQDVSDRIEKESLDGPIVKQLERGGRAVVKMDWRENITVPLQTDLRKFRTYKGGSVRDLLRAMRNKKHHYRELPAEVRETLGSLPDDFVCYFTSRFPHLLAHTYRAMELCSHERLFQPYYFHEPPEPQPPVTPDAL.

The N-terminal stretch at 1 to 18 (MPARRLLLLLTLLLPGLG) is a signal peptide. The Lumenal portion of the chain corresponds to 19–443 (IFGSTSTVTL…EAPVDSMLKD (425 aa)). N-linked (GlcNAc...) asparagine glycosylation is present at Asn-176. Polar residues predominate over residues 410-419 (TSENAPTTVS). Positions 410–434 (TSENAPTTVSRDVEEKPAHAPARPE) are disordered. A helical transmembrane segment spans residues 444–464 (MATIILSTFLLIGWVAFIITY). Residues 465 to 977 (PLSMHQQQQL…PQPPVTPDAL (513 aa)) lie on the Cytoplasmic side of the membrane. The tract at residues 491 to 559 (QQQQQLPFHP…PSLEQDDGDE (69 aa)) is disordered. The span at 513–552 (TSGPYSESSGTSSPSTSPRASNHSLCSGSSASKAGSSPSL) shows a compositional bias: low complexity. The 262-residue stretch at 571–832 (FCPKDVLGHG…AKHVLKHPFF (262 aa)) folds into the Protein kinase domain. ATP is bound by residues 577–585 (LGHGAEGTI), Lys-599, and 643–645 (ELC). Asp-688 acts as the Proton acceptor in catalysis. Residues 690 to 693 (KPHN) and Asp-711 contribute to the ATP site. Phosphoserine is present on residues Ser-724 and Ser-729. Residues 835-963 (LEKQLQFFQD…ERLFQPYYFH (129 aa)) form the KEN domain. An interacts with hydroxy-aryl-aldehyde inhibitors region spans residues 906–907 (NK). Thr-973 is modified (phosphothreonine).

It belongs to the protein kinase superfamily. Ser/Thr protein kinase family. Monomer. Homodimer; disulfide-linked; homodimerization takes place in response to endoplasmic reticulum stress and promotes activation of the kinase and endoribonuclease activities. Dimer formation is driven by hydrophobic interactions within the N-terminal luminal domains and stabilized by disulfide bridges. Interacts (via the luminal region) with DNAJB9/ERdj4; interaction takes place in unstressed cells and promotes recruitment of HSPA5/BiP. Interacts (via the luminal region) with HSPA5/BiP; HSPA5/BiP is a negative regulator of the unfolded protein response (UPR) that prevents homodimerization of ERN1/IRE1 and subsequent activation of the protein. Interaction with HSPA5 also competitively inhibits ERN1 interaction with MANF. Interacts with PDIA6, a negative regulator of the UPR; the interaction is direct and disrupts homodimerization. Interacts with DAB2IP (via PH domain); the interaction occurs in a endoplasmic reticulum stress-induced dependent manner and is required for subsequent recruitment of TRAF2 to ERN1/IRE1. Interacts with TAOK3 and TRAF2. Interacts with RNF13. Interacts with LACC1. Interacts (when unphosphorylated) with DDRGK1; interaction is dependent on UFM1 and takes place in response to endoplasmic reticulum stress, regulating ERN1/IRE1-alpha stability. Interacts (via N-terminus) with P4HB/PDIA1; the interaction is enhanced by phosphorylation of P4HB by FAM20C in response to endoplasmic reticulum stress and results in attenuation of ERN1 activity. Interacts with TMBIM6; this interaction inhibits ERN1 activity. Interacts (via luminal domain) with MANF (via C-terminus); the interaction is decreased in the presence of increasing concentrations of Ca(2+). Mg(2+) is required as a cofactor. Post-translationally, autophosphorylated following homodimerization. Autophosphorylation promotes activation of the endoribonuclease domain. In response to ER stress, phosphorylated at Ser-724, Ser-729 and possibly Ser-726; phosphorylation promotes oligomerization and endoribonuclease activity. Dephosphorylated at Ser-724, Ser-729 and possibly Ser-726 by RPAP2 to abort failed ER-stress adaptation and trigger apoptosis. Phosphorylated at Ser-724; in response to the ER stressor tunicamycin. ADP-ribosylated by PARP16 upon ER stress, which increases both kinase and endonuclease activities. In terms of tissue distribution, ubiquitously expressed. High levels observed in pancreatic tissue.

It is found in the endoplasmic reticulum membrane. The enzyme catalyses L-seryl-[protein] + ATP = O-phospho-L-seryl-[protein] + ADP + H(+). The catalysed reaction is L-threonyl-[protein] + ATP = O-phospho-L-threonyl-[protein] + ADP + H(+). The kinase domain is activated by trans-autophosphorylation following homodimerization. Kinase activity is required for activation of the endoribonuclease domain. Endoribonuclease activity is specifically inhibited by hydroxy-aryl-aldehydes (HAA). In terms of biological role, serine/threonine-protein kinase and endoribonuclease that acts as a key sensor for the endoplasmic reticulum unfolded protein response (UPR). In unstressed cells, the endoplasmic reticulum luminal domain is maintained in its inactive monomeric state by binding to the endoplasmic reticulum chaperone HSPA5/BiP. Accumulation of misfolded proteins in the endoplasmic reticulum causes release of HSPA5/BiP, allowing the luminal domain to homodimerize, promoting autophosphorylation of the kinase domain and subsequent activation of the endoribonuclease activity. The endoribonuclease activity is specific for XBP1 mRNA and excises 26 nucleotides from XBP1 mRNA. The resulting spliced transcript of XBP1 encodes a transcriptional activator protein that up-regulates expression of UPR target genes. Acts as an upstream signal for ER stress-induced GORASP2-mediated unconventional (ER/Golgi-independent) trafficking of CFTR to cell membrane by modulating the expression and localization of SEC16A. This is Serine/threonine-protein kinase/endoribonuclease IRE1 from Homo sapiens (Human).